Reading from the N-terminus, the 686-residue chain is Rhophilin-2 (686 aa).

The REM-1 domain maps to 26–100 (NPLAQTGRSK…LEGLNISVGV (75 aa)). The tract at residues 46–66 (QILKAVRMRTGAENLLKVATN) is interaction with Rho. In terms of domain architecture, BRO1 spans 111 to 460 (PLIPLGLKET…RLKYAQHQDD (350 aa)). A PDZ domain is found at 515-593 (RSIHFTAEEG…DGVEMKVVSL (79 aa)). T655 carries the post-translational modification Phosphothreonine.

This sequence belongs to the RHPN family. As to quaternary structure, interacts with GTP-bound RhoA and RhoB. Interacts with both GTP- and GDP-bound RhoA. Interacts with KRT18. In terms of tissue distribution, mainly expressed in thyroid.

It is found in the cytoplasm. It localises to the perinuclear region. Its function is as follows. Binds specifically to GTP-Rho. May function in a Rho pathway to limit stress fiber formation and/or increase the turnover of F-actin structures in the absence of high levels of RhoA activity. The protein is Rhophilin-2 (RHPN2) of Canis lupus familiaris (Dog).